Consider the following 275-residue polypeptide: Undecaprenyl-diphosphatase (275 aa).

The next 8 helical transmembrane spans lie at 2 to 22 (LDIF…FLPI), 43 to 63 (FTDM…VVLY), 83 to 103 (WVLW…GLPL), 111 to 131 (LMNW…FIVI), 147 to 167 (TLPY…LIPG), 186 to 206 (YVAT…ASLL), 221 to 241 (LQGA…YLSI), and 255 to 275 (AFGW…TLIH).

It belongs to the UppP family.

It localises to the cell membrane. It carries out the reaction di-trans,octa-cis-undecaprenyl diphosphate + H2O = di-trans,octa-cis-undecaprenyl phosphate + phosphate + H(+). Catalyzes the dephosphorylation of undecaprenyl diphosphate (UPP). Confers resistance to bacitracin. The sequence is that of Undecaprenyl-diphosphatase from Lactiplantibacillus plantarum (strain ATCC BAA-793 / NCIMB 8826 / WCFS1) (Lactobacillus plantarum).